Reading from the N-terminus, the 504-residue chain is UDP-N-acetylmuramoylalanine--D-glutamate ligase (504 aa).

Residue 132 to 138 (GTNGKTT) participates in ATP binding. Residues 286 to 295 (DRDASDEPAP) are compositionally biased toward basic and acidic residues. Residues 286-305 (DRDASDEPAPKRRRKNEVAT) are disordered.

Belongs to the MurCDEF family.

The protein resides in the cytoplasm. It catalyses the reaction UDP-N-acetyl-alpha-D-muramoyl-L-alanine + D-glutamate + ATP = UDP-N-acetyl-alpha-D-muramoyl-L-alanyl-D-glutamate + ADP + phosphate + H(+). Its pathway is cell wall biogenesis; peptidoglycan biosynthesis. Functionally, cell wall formation. Catalyzes the addition of glutamate to the nucleotide precursor UDP-N-acetylmuramoyl-L-alanine (UMA). In Paraburkholderia xenovorans (strain LB400), this protein is UDP-N-acetylmuramoylalanine--D-glutamate ligase.